The primary structure comprises 129 residues: Small ribosomal subunit protein uS11 (129 aa).

It belongs to the universal ribosomal protein uS11 family. As to quaternary structure, part of the 30S ribosomal subunit. Interacts with proteins S7 and S18. Binds to IF-3.

Functionally, located on the platform of the 30S subunit, it bridges several disparate RNA helices of the 16S rRNA. Forms part of the Shine-Dalgarno cleft in the 70S ribosome. The protein is Small ribosomal subunit protein uS11 of Geobacillus thermodenitrificans (strain NG80-2).